Consider the following 571-residue polypeptide: Sulfite reductase [NADPH] hemoprotein beta-component (571 aa).

[4Fe-4S] cluster is bound by residues Cys-436, Cys-442, Cys-481, and Cys-485. Cys-485 contacts siroheme.

The protein belongs to the nitrite and sulfite reductase 4Fe-4S domain family. As to quaternary structure, alpha(8)-beta(8). The alpha component is a flavoprotein, the beta component is a hemoprotein. It depends on siroheme as a cofactor. [4Fe-4S] cluster is required as a cofactor.

It catalyses the reaction hydrogen sulfide + 3 NADP(+) + 3 H2O = sulfite + 3 NADPH + 4 H(+). The protein operates within sulfur metabolism; hydrogen sulfide biosynthesis; hydrogen sulfide from sulfite (NADPH route): step 1/1. Component of the sulfite reductase complex that catalyzes the 6-electron reduction of sulfite to sulfide. This is one of several activities required for the biosynthesis of L-cysteine from sulfate. The polypeptide is Sulfite reductase [NADPH] hemoprotein beta-component (Bacillus velezensis (strain DSM 23117 / BGSC 10A6 / LMG 26770 / FZB42) (Bacillus amyloliquefaciens subsp. plantarum)).